The chain runs to 466 residues: L-seryl-tRNA(Sec) selenium transferase (466 aa).

Lys-294 carries the post-translational modification N6-(pyridoxal phosphate)lysine.

It belongs to the SelA family. Pyridoxal 5'-phosphate is required as a cofactor.

The protein localises to the cytoplasm. It catalyses the reaction L-seryl-tRNA(Sec) + selenophosphate + H(+) = L-selenocysteinyl-tRNA(Sec) + phosphate. It functions in the pathway aminoacyl-tRNA biosynthesis; selenocysteinyl-tRNA(Sec) biosynthesis; selenocysteinyl-tRNA(Sec) from L-seryl-tRNA(Sec) (bacterial route): step 1/1. Converts seryl-tRNA(Sec) to selenocysteinyl-tRNA(Sec) required for selenoprotein biosynthesis. This is L-seryl-tRNA(Sec) selenium transferase from Carboxydothermus hydrogenoformans (strain ATCC BAA-161 / DSM 6008 / Z-2901).